We begin with the raw amino-acid sequence, 495 residues long: Trimethylamine methyltransferase MttB (495 aa).

A non-standard amino acid (pyrrolysine) is located at residue Pyl334.

This sequence belongs to the trimethylamine methyltransferase family.

The catalysed reaction is Co(I)-[trimethylamine-specific corrinoid protein] + trimethylamine + H(+) = methyl-Co(III)-[trimethylamine-specific corrinoid protein] + dimethylamine. Its pathway is one-carbon metabolism; methanogenesis from trimethylamine. In terms of biological role, catalyzes the transfer of a methyl group from trimethylamine to the corrinoid cofactor of MttC. This chain is Trimethylamine methyltransferase MttB (mttB), found in Methanosarcina barkeri (strain Fusaro / DSM 804).